A 339-amino-acid polypeptide reads, in one-letter code: Uroporphyrinogen decarboxylase (339 aa).

Substrate is bound by residues 21–25, Asp71, Tyr147, Ser202, and His315; that span reads RQAGR.

Belongs to the uroporphyrinogen decarboxylase family. As to quaternary structure, homodimer.

The protein localises to the cytoplasm. The catalysed reaction is uroporphyrinogen III + 4 H(+) = coproporphyrinogen III + 4 CO2. It functions in the pathway porphyrin-containing compound metabolism; protoporphyrin-IX biosynthesis; coproporphyrinogen-III from 5-aminolevulinate: step 4/4. In terms of biological role, catalyzes the decarboxylation of four acetate groups of uroporphyrinogen-III to yield coproporphyrinogen-III. This is Uroporphyrinogen decarboxylase from Helicobacter pylori (strain G27).